A 156-amino-acid polypeptide reads, in one-letter code: ADP-ribosylation factor-like protein 2-binding protein (156 aa).

The protein belongs to the ARL2BP family.

Its subcellular location is the cytoplasm. It is found in the mitochondrion intermembrane space. The protein localises to the cytoskeleton. It localises to the microtubule organizing center. The protein resides in the centrosome. Its subcellular location is the nucleus. It is found in the spindle. The protein localises to the cilium basal body. In terms of biological role, plays a role as an effector of the ADP-ribosylation factor-like protein 2, ARL2. This Xenopus laevis (African clawed frog) protein is ADP-ribosylation factor-like protein 2-binding protein (arl2bp).